Here is a 231-residue protein sequence, read N- to C-terminus: Ureidoacrylate amidohydrolase RutB (231 aa).

Asp-25 (proton acceptor) is an active-site residue. Lys-134 is a catalytic residue. Cys-167 acts as the Nucleophile in catalysis.

This sequence belongs to the isochorismatase family. RutB subfamily.

The enzyme catalyses (Z)-3-ureidoacrylate + H2O + H(+) = (Z)-3-aminoacrylate + NH4(+) + CO2. The catalysed reaction is (Z)-3-ureidoacrylate + H2O = (Z)-3-aminoacrylate + carbamate + H(+). It carries out the reaction (Z)-2-methylureidoacrylate + H2O + H(+) = (Z)-2-methylaminoacrylate + NH4(+) + CO2. Its function is as follows. Hydrolyzes ureidoacrylate to form aminoacrylate and carbamate. The carbamate hydrolyzes spontaneously, thereby releasing one of the nitrogen atoms of the pyrimidine ring as ammonia and one of its carbon atoms as CO2. The sequence is that of Ureidoacrylate amidohydrolase RutB from Escherichia coli O18:K1:H7 (strain IHE3034 / ExPEC).